A 409-amino-acid polypeptide reads, in one-letter code: DNA replication and repair protein RecF (409 aa).

Residue 30 to 37 (GSNGHGKT) coordinates ATP.

It belongs to the RecF family.

The protein localises to the cytoplasm. Functionally, the RecF protein is involved in DNA metabolism; it is required for DNA replication and normal SOS inducibility. RecF binds preferentially to single-stranded, linear DNA. It also seems to bind ATP. This Rhodococcus erythropolis (strain PR4 / NBRC 100887) protein is DNA replication and repair protein RecF.